A 326-amino-acid chain; its full sequence is N-acetyl-gamma-glutamyl-phosphate reductase (326 aa).

C155 is an active-site residue.

The protein belongs to the NAGSA dehydrogenase family. Type 1 subfamily.

Its subcellular location is the cytoplasm. It carries out the reaction N-acetyl-L-glutamate 5-semialdehyde + phosphate + NADP(+) = N-acetyl-L-glutamyl 5-phosphate + NADPH + H(+). Its pathway is amino-acid biosynthesis; L-arginine biosynthesis; N(2)-acetyl-L-ornithine from L-glutamate: step 3/4. Catalyzes the NADPH-dependent reduction of N-acetyl-5-glutamyl phosphate to yield N-acetyl-L-glutamate 5-semialdehyde. The polypeptide is N-acetyl-gamma-glutamyl-phosphate reductase (Shewanella baltica (strain OS155 / ATCC BAA-1091)).